The primary structure comprises 282 residues: Release factor glutamine methyltransferase (282 aa).

D141, F169, and N186 together coordinate S-adenosyl-L-methionine. 186–189 (NPPY) is a binding site for substrate.

It belongs to the protein N5-glutamine methyltransferase family. PrmC subfamily.

The catalysed reaction is L-glutaminyl-[peptide chain release factor] + S-adenosyl-L-methionine = N(5)-methyl-L-glutaminyl-[peptide chain release factor] + S-adenosyl-L-homocysteine + H(+). In terms of biological role, methylates the class 1 translation termination release factors RF1/PrfA and RF2/PrfB on the glutamine residue of the universally conserved GGQ motif. This Mycoplasma mycoides subsp. mycoides SC (strain CCUG 32753 / NCTC 10114 / PG1) protein is Release factor glutamine methyltransferase.